The chain runs to 418 residues: Probable mitochondrial adenine nucleotide transporter BTL2 (418 aa).

Solcar repeat units lie at residues methionine 122–glutamine 205, alanine 215–serine 300, and leucine 329–valine 414. Helical transmembrane passes span histidine 127–arginine 147, glycine 180–aspartate 200, phenylalanine 221–isoleucine 241, leucine 276–isoleucine 296, leucine 335–valine 355, and isoleucine 383–isoleucine 403.

The protein belongs to the mitochondrial carrier (TC 2.A.29) family.

Its subcellular location is the mitochondrion inner membrane. In terms of biological role, probable mitochondrial adenylate carrier that catalyzes the transport of ATP, ADP and AMP. The polypeptide is Probable mitochondrial adenine nucleotide transporter BTL2 (Arabidopsis thaliana (Mouse-ear cress)).